The following is a 47-amino-acid chain: Sperm protamine P1 (47 aa).

This sequence belongs to the protamine P1 family. In terms of tissue distribution, testis.

The protein localises to the nucleus. Its subcellular location is the chromosome. Functionally, protamines substitute for histones in the chromatin of sperm during the haploid phase of spermatogenesis. They compact sperm DNA into a highly condensed, stable and inactive complex. This Orcinus orca (Killer whale) protein is Sperm protamine P1 (PRM1).